Consider the following 219-residue polypeptide: LexA repressor (219 aa).

Positions 28–48 form a DNA-binding region, H-T-H motif; the sequence is RAEIAAELGFRSANAAEEHLQ. Catalysis depends on for autocatalytic cleavage activity residues S138 and K175.

It belongs to the peptidase S24 family. In terms of assembly, homodimer.

The enzyme catalyses Hydrolysis of Ala-|-Gly bond in repressor LexA.. Functionally, represses a number of genes involved in the response to DNA damage (SOS response), including recA and lexA. In the presence of single-stranded DNA, RecA interacts with LexA causing an autocatalytic cleavage which disrupts the DNA-binding part of LexA, leading to derepression of the SOS regulon and eventually DNA repair. The protein is LexA repressor of Herminiimonas arsenicoxydans.